A 738-amino-acid chain; its full sequence is Catalase-peroxidase (738 aa).

Residues 1–13 (MDGQDIGAGGGCP) show a composition bias toward gly residues. Residues 1 to 26 (MDGQDIGAGGGCPFSGANTNKGRRSN) form a disordered region. Residues 98 to 226 (WHSAGTYRTA…LAAVQMGLIY (129 aa)) constitute a cross-link (tryptophyl-tyrosyl-methioninium (Trp-Tyr) (with M-252)). H99 (proton acceptor) is an active-site residue. Positions 226–252 (YVNPEGPDGNPDPIASGRDIRETFARM) form a cross-link, tryptophyl-tyrosyl-methioninium (Tyr-Met) (with W-98). Residue H267 participates in heme b binding.

It belongs to the peroxidase family. Peroxidase/catalase subfamily. Homodimer or homotetramer. Heme b serves as cofactor. In terms of processing, formation of the three residue Trp-Tyr-Met cross-link is important for the catalase, but not the peroxidase activity of the enzyme.

The enzyme catalyses H2O2 + AH2 = A + 2 H2O. The catalysed reaction is 2 H2O2 = O2 + 2 H2O. Its function is as follows. Bifunctional enzyme with both catalase and broad-spectrum peroxidase activity. The chain is Catalase-peroxidase from Ruegeria sp. (strain TM1040) (Silicibacter sp.).